A 342-amino-acid polypeptide reads, in one-letter code: Dihydroorotate dehydrogenase (quinone) (342 aa).

FMN is bound by residues 61 to 65 and Thr-85; that span reads AGLDK. Lys-65 lines the substrate pocket. Residue 110-114 coordinates substrate; that stretch reads NRMGF. Positions 138 and 171 each coordinate FMN. Asn-171 is a substrate binding site. Ser-174 acts as the Nucleophile in catalysis. Asn-176 contributes to the substrate binding site. 2 residues coordinate FMN: Lys-216 and Thr-244. Residue 245–246 participates in substrate binding; sequence NT. FMN-binding positions include Gly-267, Gly-296, and 317 to 318; that span reads YS.

The protein belongs to the dihydroorotate dehydrogenase family. Type 2 subfamily. Monomer. FMN serves as cofactor.

It localises to the cell membrane. It carries out the reaction (S)-dihydroorotate + a quinone = orotate + a quinol. It functions in the pathway pyrimidine metabolism; UMP biosynthesis via de novo pathway; orotate from (S)-dihydroorotate (quinone route): step 1/1. Catalyzes the conversion of dihydroorotate to orotate with quinone as electron acceptor. This chain is Dihydroorotate dehydrogenase (quinone), found in Pseudomonas aeruginosa (strain UCBPP-PA14).